We begin with the raw amino-acid sequence, 32 residues long: Photosystem I reaction center subunit XII (32 aa).

A helical membrane pass occupies residues 9 to 28 (VYIALVVALIPGLLAWRLAT).

Belongs to the PsaM family.

It localises to the cellular thylakoid membrane. The chain is Photosystem I reaction center subunit XII from Nostoc sp. (strain PCC 7120 / SAG 25.82 / UTEX 2576).